The sequence spans 2201 residues: Genome polyprotein (2201 aa).

The N-myristoyl glycine; by host moiety is linked to residue G2. Over 2–1511 (GAQVSTQKTG…YVSRAFICLQ (1510 aa)) the chain is Cytoplasmic. The tract at residues 566–582 (KLQGDVEEAIERARCTV) is amphipathic alpha-helix. The short motif at 858–860 (RGD) is the Cell attachment site element. Active-site for protease 2A activity residues include H888 and D906. The Zn(2+) site is built by C923 and C925. C977 functions as the For protease 2A activity in the catalytic mechanism. C983 and H985 together coordinate Zn(2+). The segment at 1117–1189 (NDSWLKKFTE…EQSAPSQSDQ (73 aa)) is membrane-binding. Residues 1117-1255 (NDSWLKKFTE…SPGAGKSVAT (139 aa)) are oligomerization. Positions 1138–1142 (AIKIQ) are RNA-binding. In terms of domain architecture, SF3 helicase spans 1221-1377 (EKKMSNYIQF…SMYSQNGKIN (157 aa)). C1385, C1397, and C1402 together coordinate Zn(2+). The C4-type; degenerate zinc-finger motif lies at 1385–1402 (CDEECCPVNFKKCCPLVC). An RNA-binding region spans residues 1429–1436 (EYNHRHSV). Residues 1440–1445 (LEALFQ) are oligomerization. The stretch at 1512–1527 (AITTFVSVAGIIYIIY) is an intramembrane region. Over 1528 to 2201 (KLFAGFQGAY…TLRRKWLDSF (674 aa)) the chain is Cytoplasmic. Y1537 is modified (O-(5'-phospho-RNA)-tyrosine). The 179-residue stretch at 1557–1735 (GPAFEFAVAM…FSAALLKHYF (179 aa)) folds into the Peptidase C3 domain. Catalysis depends on for protease 3C activity residues H1596, E1627, and C1703. The region spanning 1966–2082 (GHLIAFDYSG…SYPWPIDASL (117 aa)) is the RdRp catalytic domain. The Mg(2+) site is built by D1972 and D2068.

This sequence belongs to the picornaviruses polyprotein family. As to quaternary structure, interacts with capsid protein VP1 and capsid protein VP3 to form heterotrimeric protomers. Interacts with capsid protein VP0, and capsid protein VP3 to form heterotrimeric protomers. Five protomers subsequently associate to form pentamers which serve as building blocks for the capsid. Interacts with capsid protein VP2, capsid protein VP3 and capsid protein VP4 following cleavage of capsid protein VP0. Interacts with host integrin heterodimer ITGAV/ITGB6. In terms of assembly, interacts with capsid protein VP1 and capsid protein VP3 in the mature capsid. As to quaternary structure, interacts with capsid protein VP0 and capsid protein VP1 to form heterotrimeric protomers. Five protomers subsequently associate to form pentamers which serve as building blocks for the capsid. Interacts with capsid protein VP4 in the mature capsid. Interacts with protein 2C; this interaction may be important for virion morphogenesis. Interacts with capsid protein VP1 and capsid protein VP3. In terms of assembly, homodimer. As to quaternary structure, homohexamer; forms a hexameric ring structure with 6-fold symmetry characteristic of AAA+ ATPases. Interacts (via N-terminus) with host RTN3 (via reticulon domain); this interaction is important for viral replication. Interacts with capsid protein VP3; this interaction may be important for virion morphogenesis. Interacts with protein 3CD. In terms of assembly, homodimer. Interacts with host GBF1. Interacts (via GOLD domain) with host ACBD3 (via GOLD domain); this interaction allows the formation of a viral protein 3A/ACBD3 heterotetramer with a 2:2 stoichiometry, which will stimulate the recruitment of host PI4KB in order to synthesize PI4P at the viral RNA replication sites. As to quaternary structure, interacts with RNA-directed RNA polymerase. Interacts with protein 3AB and with RNA-directed RNA polymerase. In terms of assembly, interacts with Viral protein genome-linked and with protein 3CD. The cofactor is Mg(2+). Specific enzymatic cleavages in vivo by the viral proteases yield processing intermediates and the mature proteins. Post-translationally, myristoylation is required for the formation of pentamers during virus assembly. Further assembly of 12 pentamers and a molecule of genomic RNA generates the provirion. In terms of processing, during virion maturation, immature virions are rendered infectious following cleavage of VP0 into VP4 and VP2. This maturation seems to be an autocatalytic event triggered by the presence of RNA in the capsid and it is followed by a conformational change infectious virion. Myristoylation is required during RNA encapsidation and formation of the mature virus particle. Post-translationally, VPg is uridylylated by the polymerase into VPg-pUpU. This acts as a nucleotide-peptide primer for the genomic RNA replication.

It is found in the virion. The protein localises to the host cytoplasm. The protein resides in the host cytoplasmic vesicle membrane. It localises to the host nucleus. The catalysed reaction is a ribonucleoside 5'-triphosphate + H2O = a ribonucleoside 5'-diphosphate + phosphate + H(+). It carries out the reaction Selective cleavage of Tyr-|-Gly bond in the picornavirus polyprotein.. It catalyses the reaction RNA(n) + a ribonucleoside 5'-triphosphate = RNA(n+1) + diphosphate. The enzyme catalyses Selective cleavage of Gln-|-Gly bond in the poliovirus polyprotein. In other picornavirus reactions Glu may be substituted for Gln, and Ser or Thr for Gly.. With respect to regulation, replication or transcription is subject to high level of random mutations by the nucleotide analog ribavirin. Forms an icosahedral capsid of pseudo T=3 symmetry with capsid proteins VP2 and VP3. The capsid is 300 Angstroms in diameter, composed of 60 copies of each capsid protein and enclosing the viral positive strand RNA genome. Capsid protein VP1 mainly forms the vertices of the capsid. Capsid protein VP1 interacts with host integrin ITGAV/ITGB6 to provide virion attachment to target host cells. This attachment induces virion internalization. Tyrosine kinases are probably involved in the entry process. After binding to its receptor, the capsid undergoes conformational changes. Capsid protein VP1 N-terminus (that contains an amphipathic alpha-helix) and capsid protein VP4 are externalized. Together, they shape a pore in the host membrane through which viral genome is translocated to host cell cytoplasm. In terms of biological role, forms an icosahedral capsid of pseudo T=3 symmetry with capsid proteins VP2 and VP3. The capsid is 300 Angstroms in diameter, composed of 60 copies of each capsid protein and enclosing the viral positive strand RNA genome. Its function is as follows. Lies on the inner surface of the capsid shell. After binding to the host receptor, the capsid undergoes conformational changes. Capsid protein VP4 is released, Capsid protein VP1 N-terminus is externalized, and together, they shape a pore in the host membrane through which the viral genome is translocated into the host cell cytoplasm. Functionally, component of immature procapsids, which is cleaved into capsid proteins VP4 and VP2 after maturation. Allows the capsid to remain inactive before the maturation step. Cysteine protease that cleaves viral polyprotein and specific host proteins. It is responsible for the autocatalytic cleavage between the P1 and P2 regions, which is the first cleavage occurring in the polyprotein. Also cleaves the host translation initiation factor EIF4G1, in order to shut down the capped cellular mRNA translation. Inhibits the host nucleus-cytoplasm protein and RNA trafficking by cleaving host members of the nuclear pores. Counteracts stress granule formation probably by antagonizing its assembly or promoting its dissassembly. Cleaves and inhibits host IFIH1/MDA5, thereby inhibiting the type-I IFN production and the establishment of the antiviral state. Cleaves and inhibits host MAVS, thereby inhibiting the type-I IFN production and the establishment of the antiviral state. In terms of biological role, plays an essential role in the virus replication cycle by acting as a viroporin. Creates a pore in the host endoplasmic reticulum and as a consequence releases Ca2+ in the cytoplasm of infected cell. In turn, high levels of cytoplasmic calcium may trigger membrane trafficking and transport of viral ER-associated proteins to viroplasms, sites of viral genome replication. Its function is as follows. Induces and associates with structural rearrangements of intracellular membranes. Displays RNA-binding, nucleotide binding and NTPase activities. May play a role in virion morphogenesis and viral RNA encapsidation by interacting with the capsid protein VP3. Functionally, localizes the viral replication complex to the surface of membranous vesicles. Together with protein 3CD binds the Cis-Active RNA Element (CRE) which is involved in RNA synthesis initiation. Acts as a cofactor to stimulate the activity of 3D polymerase, maybe through a nucleid acid chaperone activity. Localizes the viral replication complex to the surface of membranous vesicles. It inhibits host cell endoplasmic reticulum-to-Golgi apparatus transport and causes the disassembly of the Golgi complex, possibly through GBF1 interaction. This would result in depletion of MHC, trail receptors and IFN receptors at the host cell surface. Plays an essential role in viral RNA replication by recruiting ACBD3 and PI4KB at the viral replication sites, thereby allowing the formation of the rearranged membranous structures where viral replication takes place. In terms of biological role, acts as a primer for viral RNA replication and remains covalently bound to viral genomic RNA. VPg is uridylylated prior to priming replication into VPg-pUpU. The oriI viral genomic sequence may act as a template for this. The VPg-pUpU is then used as primer on the genomic RNA poly(A) by the RNA-dependent RNA polymerase to replicate the viral genome. During genome replication, the VPg-RNA linkage is removed by the host TDP2, thereby accelerating replication. During the late stage of the replication cycle, host TDP2 is excluded from sites of viral RNA synthesis and encapsidation, allowing for the generation of progeny virions. Its function is as follows. Involved in the viral replication complex and viral polypeptide maturation. It exhibits protease activity with a specificity and catalytic efficiency that is different from protease 3C. Protein 3CD lacks polymerase activity. Protein 3CD binds to the 5'UTR of the viral genome. Functionally, replicates the viral genomic RNA on the surface of intracellular membranes. May form linear arrays of subunits that propagate along a strong head-to-tail interaction called interface-I. Covalently attaches UMP to a tyrosine of VPg, which is used to prime RNA synthesis. The positive stranded RNA genome is first replicated at virus induced membranous vesicles, creating a dsRNA genomic replication form. This dsRNA is then used as template to synthesize positive stranded RNA genomes. ss(+)RNA genomes are either translated, replicated or encapsidated. Major viral protease that mediates proteolytic processing of the polyprotein. Cleaves host EIF5B, contributing to host translation shutoff. Also cleaves host PABPC1, contributing to host translation shutoff. Cleaves host NLRP1, triggers host N-glycine-mediated degradation of the autoinhibitory NLRP1 N-terminal fragment. This is Genome polyprotein from Coxsackievirus A9 (strain Griggs).